The chain runs to 207 residues: Suppressor of IKBKE 1 (207 aa).

Coiled-coil stretches lie at residues His-70–Glu-102 and Cys-164–Gln-192.

The protein belongs to the SIKE family. In terms of assembly, interacts with IKBKE and TBK1 via its coiled coil region. Interaction with TBK1 is disrupted upon viral infection or TLR3 stimulation. Interacts with CDC42BPB. Interacts with SIKE1 which mediates association with the STRIPAK core complex composed of PP2A catalytic and scaffolding subunits, the striatins (PP2A regulatory subunits), the striatin-associated proteins MOB4, STRIP1 and STRIP2, PDCD10 and members of the STE20 kinases, such as STK24 and STK26.

Its subcellular location is the cytoplasm. Physiological suppressor of IKK-epsilon and TBK1 that plays an inhibitory role in virus- and TLR3-triggered IRF3. Inhibits TLR3-mediated activation of interferon-stimulated response elements (ISRE) and the IFN-beta promoter. May act by disrupting the interactions of IKBKE or TBK1 with TICAM1/TRIF, IRF3 and RIGI. Does not inhibit NF-kappa-B activation pathways. Associates with the striatin-interacting phosphatase and kinase (STRIPAK) core complex, forming the extended (SIKE1:SLMAP)STRIPAK complex. The (SIKE1:SLMAP)STRIPAK complex dephosphorylates STK3 leading to the inhibition of Hippo signaling and the control of cell growth. This chain is Suppressor of IKBKE 1 (Sike1), found in Mus musculus (Mouse).